The primary structure comprises 1135 residues: Exportin-5 (1135 aa).

The region spanning 32–117 is the Importin N-terminal domain; the sequence is SQVFLEEIKT…KEKLVTILVD (86 aa). The interval 630–631 is pre-siRNA binding; that stretch reads TE.

This sequence belongs to the exportin family. Found in a nuclear export complex with RanGTP, exportin and pre-miRNA.

It is found in the nucleus. The protein localises to the cytoplasm. In terms of biological role, mediates the nuclear export of proteins bearing a double-stranded RNA binding domain (dsRBD) and double-stranded RNAs (cargos). Functionally, mediates the nuclear export of micro-RNA precursors, which form short hairpins. In Dictyostelium discoideum (Social amoeba), this protein is Exportin-5 (xpo5).